Consider the following 150-residue polypeptide: D-aminoacyl-tRNA deacylase (150 aa).

The Gly-cisPro motif, important for rejection of L-amino acids motif lies at 136–137; that stretch reads GP.

This sequence belongs to the DTD family. In terms of assembly, homodimer.

Its subcellular location is the cytoplasm. The enzyme catalyses glycyl-tRNA(Ala) + H2O = tRNA(Ala) + glycine + H(+). It catalyses the reaction a D-aminoacyl-tRNA + H2O = a tRNA + a D-alpha-amino acid + H(+). Functionally, an aminoacyl-tRNA editing enzyme that deacylates mischarged D-aminoacyl-tRNAs. Also deacylates mischarged glycyl-tRNA(Ala), protecting cells against glycine mischarging by AlaRS. Acts via tRNA-based rather than protein-based catalysis; rejects L-amino acids rather than detecting D-amino acids in the active site. By recycling D-aminoacyl-tRNA to D-amino acids and free tRNA molecules, this enzyme counteracts the toxicity associated with the formation of D-aminoacyl-tRNA entities in vivo and helps enforce protein L-homochirality. The sequence is that of D-aminoacyl-tRNA deacylase from Staphylococcus aureus (strain MRSA252).